Here is a 568-residue protein sequence, read N- to C-terminus: Oxygen-dependent choline dehydrogenase (568 aa).

Residue 6–35 participates in FAD binding; sequence DYIIVGAGSAGCVLADRLSASGEHYILLLE. The active-site Proton acceptor is H470.

This sequence belongs to the GMC oxidoreductase family. The cofactor is FAD.

It catalyses the reaction choline + A = betaine aldehyde + AH2. The catalysed reaction is betaine aldehyde + NAD(+) + H2O = glycine betaine + NADH + 2 H(+). It functions in the pathway amine and polyamine biosynthesis; betaine biosynthesis via choline pathway; betaine aldehyde from choline (cytochrome c reductase route): step 1/1. Its function is as follows. Involved in the biosynthesis of the osmoprotectant glycine betaine. Catalyzes the oxidation of choline to betaine aldehyde and betaine aldehyde to glycine betaine at the same rate. The polypeptide is Oxygen-dependent choline dehydrogenase (Photobacterium profundum (strain SS9)).